A 448-amino-acid polypeptide reads, in one-letter code: Chromogranin-A (448 aa).

The first 18 residues, 1–18, serve as a signal peptide directing secretion; sequence MRSAVVLALLLCAGQVIA. A disulfide bridge links Cys-35 with Cys-56. Residues 116-251 are disordered; sequence LKEVTEEALS…AFNPHPSLSY (136 aa). Composition is skewed to basic and acidic residues over residues 129–139 and 158–175; these read AEARGDSKEVE and QESR…KEAI. Residue Ser-197 is modified to Phosphoserine. Basic and acidic residues predominate over residues 205 to 222; it reads VDREKGLGAERGQQAKRE. Acidic residues predominate over residues 223 to 238; it reads EEEDEAGEKADAEEEG. Residues Ser-258 and Ser-288 each carry the phosphoserine modification. The tract at residues 263-429 is disordered; it reads LVVDGARKTG…PEDQELESLS (167 aa). Gly-308 is subject to Glycine amide. The span at 310 to 350 shows a compositional bias: basic and acidic residues; sequence KSRELEQEKEQERLSKEWEDAKRWSKMDQLAKELTAEKRLE. A phosphoserine mark is found at Ser-311, Ser-324, and Ser-362. Methionine sulfoxide is present on Met-363. Phosphoserine occurs at positions 389, 393, 415, and 429. The span at 405 to 422 shows a compositional bias: basic and acidic residues; the sequence is YPEEKKEEEGSANRRPED. O-linked (Xyl...) (chondroitin sulfate) serine glycosylation is present at Ser-415.

The protein belongs to the chromogranin/secretogranin protein family. As to quaternary structure, self-interacts; self-assembly is promoted in vitro by chondroitin sulfate attachment which occurs at mildly acidic pH conditions. Interacts with SCG3. Interacts with ITPR1 in the secretory granules. Post-translationally, O-glycosylated; contains chondroitin sulfate (CS). CS attachment is pH-dependent, being observed at mildly acidic conditions of pH 5 but not at neutral pH, and promotes self-assembly in vitro. In terms of tissue distribution, highly expressed in adrenal medulla and pituitary gland. Weaker expression detected in cerebrum, cerebellum, spinal cord, liver, thyroid gland, striated muscle, lung, spleen, kidney, parotid gland, and sublingual gland.

The protein resides in the secreted. The protein localises to the cytoplasmic vesicle. It localises to the secretory vesicle. Its subcellular location is the neuronal dense core vesicle. Functionally, strongly inhibits glucose induced insulin release from the pancreas. Inhibits catecholamine release from chromaffin cells and noradrenergic neurons by acting as a non-competitive nicotinic cholinergic antagonist. Can induce mast cell migration, degranulation and production of cytokines and chemokines. In terms of biological role, regulates granule biogenesis in endocrine cells by up-regulating the transcription of protease nexin 1 (SERPINE2) via a cAMP-PKA-SP1 pathway. This leads to inhibition of granule protein degradation in the Golgi complex which in turn promotes granule formation. In Equus caballus (Horse), this protein is Chromogranin-A (CHGA).